A 113-amino-acid polypeptide reads, in one-letter code: UPF0482 protein YnfB (113 aa).

A signal peptide spans methionine 1 to alanine 28.

Belongs to the UPF0482 family.

This is UPF0482 protein YnfB from Salmonella arizonae (strain ATCC BAA-731 / CDC346-86 / RSK2980).